A 351-amino-acid chain; its full sequence is Fructose-1,6-bisphosphatase class 1 1 (351 aa).

Mg(2+)-binding residues include glutamate 84, aspartate 106, leucine 108, and aspartate 109. Substrate-binding positions include 109 to 112 (DGSS) and asparagine 205. Glutamate 277 contributes to the Mg(2+) binding site.

This sequence belongs to the FBPase class 1 family. As to quaternary structure, homotetramer. Mg(2+) is required as a cofactor.

Its subcellular location is the cytoplasm. It carries out the reaction beta-D-fructose 1,6-bisphosphate + H2O = beta-D-fructose 6-phosphate + phosphate. It participates in carbohydrate biosynthesis; Calvin cycle. This chain is Fructose-1,6-bisphosphatase class 1 1, found in Methylibium petroleiphilum (strain ATCC BAA-1232 / LMG 22953 / PM1).